The chain runs to 312 residues: Glyoxylate/hydroxypyruvate reductase A (312 aa).

Arginine 227 is an active-site residue. Catalysis depends on histidine 275, which acts as the Proton donor.

It belongs to the D-isomer specific 2-hydroxyacid dehydrogenase family. GhrA subfamily.

The protein localises to the cytoplasm. The enzyme catalyses glycolate + NADP(+) = glyoxylate + NADPH + H(+). It catalyses the reaction (R)-glycerate + NAD(+) = 3-hydroxypyruvate + NADH + H(+). It carries out the reaction (R)-glycerate + NADP(+) = 3-hydroxypyruvate + NADPH + H(+). Catalyzes the NADPH-dependent reduction of glyoxylate and hydroxypyruvate into glycolate and glycerate, respectively. This is Glyoxylate/hydroxypyruvate reductase A from Salmonella typhi.